Here is a 1108-residue protein sequence, read N- to C-terminus: Alpha-mannosidase 2 (1108 aa).

The Cytoplasmic segment spans residues 1–9 (MLRIRRRFA). A helical; Signal-anchor for type II membrane protein transmembrane segment spans residues 10–30 (LVICSGCLLVFLSLYIILNFA). Residues 31–1108 (APAATQIKPN…TAAYVSSHSS (1078 aa)) lie on the Lumenal side of the membrane. Residues 70 to 92 (AETSNRDDPIRPPLKVARSPRPG) form a disordered region. Residues His-153, Asp-155, Asp-267, and His-534 each contribute to the Zn(2+) site. Asp-267 acts as the Nucleophile in catalysis.

This sequence belongs to the glycosyl hydrolase 38 family. In terms of assembly, homodimer; disulfide-linked. It depends on Zn(2+) as a cofactor.

The protein localises to the golgi apparatus membrane. The catalysed reaction is N(4)-{beta-D-GlcNAc-(1-&gt;2)-alpha-D-Man-(1-&gt;3)-[alpha-D-Man-(1-&gt;3)-[alpha-D-Man-(1-&gt;6)]-alpha-D-Man-(1-&gt;6)]-beta-D-Man-(1-&gt;4)-beta-D-GlcNAc-(1-&gt;4)-beta-D-GlcNAc}-L-asparaginyl-[protein] + 2 H2O = 2 alpha-D-mannopyranose + an N(4)-{beta-D-GlcNAc-(1-&gt;2)-alpha-D-Man-(1-&gt;3)-[alpha-D-Man-(1-&gt;6)]-beta-D-Man-(1-&gt;4)-beta-D-GlcNAc-(1-&gt;4)-beta-D-GlcNAc}-L-asparaginyl-[protein]. Its pathway is protein modification; protein glycosylation. In terms of biological role, catalyzes the first committed step in the biosynthesis of complex N-glycans. It controls conversion of high mannose to complex N-glycans; the final hydrolytic step in the N-glycan maturation pathway. The protein is Alpha-mannosidase 2 of Drosophila melanogaster (Fruit fly).